The sequence spans 364 residues: Medium-wave-sensitive opsin 1 (364 aa).

The Extracellular portion of the chain corresponds to 1 to 52 (MAQRWGPHALSGVQAQDAYEDSTQASLFTYTNSNNTRGPFEGPNYHIAPRWV). The tract at residues 17–43 (DAYEDSTQASLFTYTNSNNTRGPFEGP) is required for 11-cis-retinal regeneration. An N-linked (GlcNAc...) asparagine glycan is attached at Asn-34. The chain crosses the membrane as a helical span at residues 53–77 (YHLTSAWMTIVVIASIFTNGLVLVA). At 78-89 (TMRFKKLRHPLN) the chain is on the cytoplasmic side. The helical transmembrane segment at 90–115 (WILVNLAVADLAETVIASTISVVNQV) threads the bilayer. Residues 116–129 (YGYFVLGHPLCVVE) are Extracellular-facing. Cys-126 and Cys-203 form a disulfide bridge. A helical membrane pass occupies residues 130–149 (GYTVSLCGITGLWSLAIISW). At 150–168 (ERWLVVCKPFGNVRFDAKL) the chain is on the cytoplasmic side. A helical membrane pass occupies residues 169-192 (AIVGIVFSWVWSAVWTAPPIFGWS). Topologically, residues 193-218 (RYWPYGLKTSCGPDVFSGTSYPGVQS) are extracellular. Residues 219-246 (YMMVLMVTCCITPLSIIVLCYLHVWLAI) traverse the membrane as a helical segment. At 247–268 (RAVAKQQKESESTQKAEKEVTR) the chain is on the cytoplasmic side. A helical membrane pass occupies residues 269–292 (MVVVMVLAYCLCWGPYAFFACFAT). At 293 to 300 (ANPGYSFH) the chain is on the extracellular side. Residues 301–325 (PLVAALPAYFAKSATIYNPIIYVFM) form a helical membrane-spanning segment. Lys-312 bears the N6-(retinylidene)lysine mark. Topologically, residues 326-364 (NRQFRNCILQLFGKKVEDSSELSSTSRTEASSVSSVSPA) are cytoplasmic.

Belongs to the G-protein coupled receptor 1 family. Opsin subfamily. In terms of assembly, monomer. Homodimer. Homotetramer. In terms of processing, O-glycosylated. Post-translationally, phosphorylated on some or all of the serine and threonine residues present in the C-terminal region. Expressed in cone photoreceptor cells.

The protein localises to the membrane. Functionally, visual pigments are the light-absorbing molecules that mediate vision. They consist of an apoprotein, opsin, covalently linked to cis-retinal. May increase spectral sensitivity in dim light. This Cavia porcellus (Guinea pig) protein is Medium-wave-sensitive opsin 1 (OPN1MW).